The chain runs to 293 residues: Phosphatidylserine decarboxylase proenzyme (293 aa).

Catalysis depends on charge relay system; for autoendoproteolytic cleavage activity residues Asp88, His144, and Ser247. Catalysis depends on Ser247, which acts as the Schiff-base intermediate with substrate; via pyruvic acid; for decarboxylase activity. Position 247 is a pyruvic acid (Ser); by autocatalysis (Ser247).

It belongs to the phosphatidylserine decarboxylase family. PSD-B subfamily. Prokaryotic type I sub-subfamily. Heterodimer of a large membrane-associated beta subunit and a small pyruvoyl-containing alpha subunit. Pyruvate serves as cofactor. Is synthesized initially as an inactive proenzyme. Formation of the active enzyme involves a self-maturation process in which the active site pyruvoyl group is generated from an internal serine residue via an autocatalytic post-translational modification. Two non-identical subunits are generated from the proenzyme in this reaction, and the pyruvate is formed at the N-terminus of the alpha chain, which is derived from the carboxyl end of the proenzyme. The autoendoproteolytic cleavage occurs by a canonical serine protease mechanism, in which the side chain hydroxyl group of the serine supplies its oxygen atom to form the C-terminus of the beta chain, while the remainder of the serine residue undergoes an oxidative deamination to produce ammonia and the pyruvoyl prosthetic group on the alpha chain. During this reaction, the Ser that is part of the protease active site of the proenzyme becomes the pyruvoyl prosthetic group, which constitutes an essential element of the active site of the mature decarboxylase.

It is found in the cell membrane. It catalyses the reaction a 1,2-diacyl-sn-glycero-3-phospho-L-serine + H(+) = a 1,2-diacyl-sn-glycero-3-phosphoethanolamine + CO2. It functions in the pathway phospholipid metabolism; phosphatidylethanolamine biosynthesis; phosphatidylethanolamine from CDP-diacylglycerol: step 2/2. Its function is as follows. Catalyzes the formation of phosphatidylethanolamine (PtdEtn) from phosphatidylserine (PtdSer). The sequence is that of Phosphatidylserine decarboxylase proenzyme from Xylella fastidiosa (strain M23).